The following is a 670-amino-acid chain: E3 ubiquitin-protein ligase TRAF7 (670 aa).

Disordered regions lie at residues 1 to 37 and 49 to 97; these read MSSG…FGPA and GTST…SLHS. 2 stretches are compositionally biased toward polar residues: residues 15–31 and 49–67; these read GPSN…TRME and GTST…STLA. A phosphoserine mark is found at S61, S88, and S91. An RING-type zinc finger spans residues 131–165; the sequence is CQLCCSVFKDPVITTCGHTFCRRCALKSEKCPVDN. The TRAF-type zinc finger occupies 222–276; sequence HEGSCDYRPVRCPNNPSCPPLLRMNLEAHLKECEHIKCPHSKYGCTFIGNQDTYE. 7 WD repeats span residues 394-433, 437-474, 477-513, 515-554, 557-594, 597-638, and 641-669; these read GHQG…KCQK, GHDG…KVNT, AHDN…LKLK, ELTG…CIHV, TSGG…QVRT, GHVG…CTQT, and RHQG…KVWT.

The protein belongs to the WD repeat TRAF7 family. In terms of assembly, homodimer. Interacts with MAP3K3 and promotes the kinase activity of this enzyme. In terms of processing, phosphorylated by MAP3K3. Ubiquitinates itself upon phosphorylation. In terms of tissue distribution, ubiquitously expressed with high levels in skeletal muscle, heart, colon, spleen, kidney, liver and placenta.

Its subcellular location is the cytoplasmic vesicle. The protein localises to the cytoplasm. The protein resides in the nucleus. It carries out the reaction S-ubiquitinyl-[E2 ubiquitin-conjugating enzyme]-L-cysteine + [acceptor protein]-L-lysine = [E2 ubiquitin-conjugating enzyme]-L-cysteine + N(6)-ubiquitinyl-[acceptor protein]-L-lysine.. It participates in protein modification; protein ubiquitination. In terms of biological role, E3 ubiquitin and SUMO-protein ligase that plays a role in different biological processes such as innate immunity, inflammation or apoptosis. Potentiates MAP3K3-mediated activation of JUN/AP1 and DDIT3 transcriptional regulators. Negatively regulates MYB transcriptional activity by sequestering it to the cytosol via SUMOylation. Plays a role in the phosphorylation of MAPK1 and/or MAPK3, probably via its interaction with MAP3K3. Negatively regulates RLR-mediated innate immunity by promoting 'Lys-48'-linked ubiquitination of TBK1 through its RING domain to inhibit the cellular antiviral response. Promotes 'Lys-29'-linked polyubiquitination of NEMO/IKBKG and RELA leading to targeting these two proteins to lysosomal degradative pathways, reducing the transcriptional activity of NF-kappa-B. This is E3 ubiquitin-protein ligase TRAF7 (TRAF7) from Homo sapiens (Human).